The sequence spans 94 residues: Small ribosomal subunit protein uS19 (94 aa).

It belongs to the universal ribosomal protein uS19 family.

Protein S19 forms a complex with S13 that binds strongly to the 16S ribosomal RNA. The polypeptide is Small ribosomal subunit protein uS19 (Acetivibrio thermocellus (strain ATCC 27405 / DSM 1237 / JCM 9322 / NBRC 103400 / NCIMB 10682 / NRRL B-4536 / VPI 7372) (Clostridium thermocellum)).